Consider the following 87-residue polypeptide: Small ribosomal subunit protein bS20 (87 aa).

The tract at residues 1 to 25 is disordered; the sequence is MANIKSAKKRAVQSEKRRKHNASRR.

The protein belongs to the bacterial ribosomal protein bS20 family.

In terms of biological role, binds directly to 16S ribosomal RNA. The chain is Small ribosomal subunit protein bS20 from Yersinia pseudotuberculosis serotype O:1b (strain IP 31758).